We begin with the raw amino-acid sequence, 93 residues long: Putative pterin-4-alpha-carbinolamine dehydratase (93 aa).

It belongs to the pterin-4-alpha-carbinolamine dehydratase family.

It carries out the reaction (4aS,6R)-4a-hydroxy-L-erythro-5,6,7,8-tetrahydrobiopterin = (6R)-L-erythro-6,7-dihydrobiopterin + H2O. The protein is Putative pterin-4-alpha-carbinolamine dehydratase of Nostoc punctiforme (strain ATCC 29133 / PCC 73102).